The chain runs to 236 residues: Phosphoribosylaminoimidazole-succinocarboxamide synthase (236 aa).

It belongs to the SAICAR synthetase family.

It carries out the reaction 5-amino-1-(5-phospho-D-ribosyl)imidazole-4-carboxylate + L-aspartate + ATP = (2S)-2-[5-amino-1-(5-phospho-beta-D-ribosyl)imidazole-4-carboxamido]succinate + ADP + phosphate + 2 H(+). It participates in purine metabolism; IMP biosynthesis via de novo pathway; 5-amino-1-(5-phospho-D-ribosyl)imidazole-4-carboxamide from 5-amino-1-(5-phospho-D-ribosyl)imidazole-4-carboxylate: step 1/2. The polypeptide is Phosphoribosylaminoimidazole-succinocarboxamide synthase (Pseudomonas aeruginosa (strain LESB58)).